We begin with the raw amino-acid sequence, 506 residues long: Photosystem II CP47 reaction center protein (506 aa).

Transmembrane regions (helical) follow at residues 21-36 (SVHIMHTALVAGWAGS), 101-115 (ILFSGLCFLAAIWHW), 140-156 (GIHLFLSGLGCFGFGAF), 203-218 (IAAGTLGILAGLFHLS), 237-252 (VLSSSIAAVFFAAFVV), and 457-472 (SFALLFFFGHIWHGAR).

It belongs to the PsbB/PsbC family. PsbB subfamily. As to quaternary structure, PSII is composed of 1 copy each of membrane proteins PsbA, PsbB, PsbC, PsbD, PsbE, PsbF, PsbH, PsbI, PsbJ, PsbK, PsbL, PsbM, PsbT, PsbX, PsbY, PsbZ, Psb30/Ycf12, at least 3 peripheral proteins of the oxygen-evolving complex and a large number of cofactors. It forms dimeric complexes. The cofactor is Binds multiple chlorophylls. PSII binds additional chlorophylls, carotenoids and specific lipids..

It is found in the plastid. The protein resides in the chloroplast thylakoid membrane. Functionally, one of the components of the core complex of photosystem II (PSII). It binds chlorophyll and helps catalyze the primary light-induced photochemical processes of PSII. PSII is a light-driven water:plastoquinone oxidoreductase, using light energy to abstract electrons from H(2)O, generating O(2) and a proton gradient subsequently used for ATP formation. This Cucumis sativus (Cucumber) protein is Photosystem II CP47 reaction center protein.